A 552-amino-acid polypeptide reads, in one-letter code: Hyaluronan synthase 2 (552 aa).

Residues methionine 1 to arginine 11 are Cytoplasmic-facing. Residues isoleucine 12–valine 32 traverse the membrane as a helical segment. At glycine 33–serine 45 the chain is on the extracellular side. A helical transmembrane segment spans residues phenylalanine 46–leucine 66. At glutamate 67–leucine 374 the chain is on the cytoplasmic side. The helical transmembrane segment at tryptophan 375–isoleucine 395 threads the bilayer. Over glutamine 396–lysine 402 the chain is Extracellular. A helical membrane pass occupies residues isoleucine 403–phenylalanine 423. The Cytoplasmic segment spans residues alanine 424–glycine 429. Residues asparagine 430 to alanine 450 form a helical membrane-spanning segment. Residues lysine 451–phenylalanine 475 are Extracellular-facing. A helical transmembrane segment spans residues isoleucine 476 to isoleucine 496. Residues tyrosine 497–threonine 510 lie on the Cytoplasmic side of the membrane. The chain crosses the membrane as a helical span at residues valine 511–leucine 531. Residues valine 532–valine 552 lie on the Extracellular side of the membrane.

Belongs to the NodC/HAS family. In terms of assembly, homodimer; dimerization promotes enzymatic activity. The cofactor is Mg(2+).

It is found in the cell membrane. Its subcellular location is the endoplasmic reticulum membrane. It localises to the vesicle. The protein resides in the golgi apparatus membrane. The protein localises to the lysosome. The enzyme catalyses [hyaluronan](n) + UDP-N-acetyl-alpha-D-glucosamine = N-acetyl-beta-D-glucosaminyl-(1-&gt;4)-[hyaluronan](n) + UDP + H(+). The catalysed reaction is N-acetyl-beta-D-glucosaminyl-(1-&gt;4)-[hyaluronan](n) + UDP-alpha-D-glucuronate = [hyaluronan](n+1) + UDP + H(+). It functions in the pathway glycan biosynthesis; hyaluronan biosynthesis. In terms of biological role, catalyzes the addition of GlcNAc or GlcUA monosaccharides to the nascent hyaluronan polymer. Therefore, it is essential to hyaluronan synthesis a major component of most extracellular matrices that has a structural role in tissues architectures and regulates cell adhesion, migration and differentiation. This is one of three isoenzymes responsible for cellular hyaluronan synthesis and it is particularly responsible for the synthesis of high molecular mass hyaluronan. In Gallus gallus (Chicken), this protein is Hyaluronan synthase 2 (HAS2).